The following is a 1232-amino-acid chain: DNA-directed RNA polymerase subunit beta (1232 aa).

The interval 1170–1232 is disordered; that stretch reads SVDEDADELE…LDLDDFGDEH (63 aa). Over residues 1171–1180 the composition is skewed to acidic residues; that stretch reads VDEDADELEV. Positions 1189-1198 are enriched in basic and acidic residues; sequence PEEKEEKEKE. A compositionally biased stretch (acidic residues) spans 1199 to 1232; the sequence is DSDEYDDLREEDVEPDLEELSLDDLDLDDFGDEH.

It belongs to the RNA polymerase beta chain family. The RNAP catalytic core consists of 2 alpha, 1 beta, 1 beta' and 1 omega subunit. When a sigma factor is associated with the core the holoenzyme is formed, which can initiate transcription.

The enzyme catalyses RNA(n) + a ribonucleoside 5'-triphosphate = RNA(n+1) + diphosphate. DNA-dependent RNA polymerase catalyzes the transcription of DNA into RNA using the four ribonucleoside triphosphates as substrates. This Clostridium botulinum (strain Hall / ATCC 3502 / NCTC 13319 / Type A) protein is DNA-directed RNA polymerase subunit beta.